The sequence spans 603 residues: Deuterosome assembly protein 1 (603 aa).

Coiled-coil stretches lie at residues 14–59 (CEAE…NAQT), 85–197 (MTQN…GKKQ), 227–278 (IEKL…ELQS), 336–399 (QDQP…KQLK), and 454–480 (HTSI…NGKS). At serine 546 the chain carries Phosphoserine. Residues 557 to 600 (AAQHFLLEEEKRAKELEKLLNTHIDELQRHTEFTLNKYSKLKQN) adopt a coiled-coil conformation.

The protein belongs to the CEP63 family. Interacts with CEP152; the interaction is mutually exclusive with CEP63.

The protein resides in the cytoplasm. Key structural component of the deuterosome, a structure that promotes de novo centriole amplification in multiciliated cells. Deuterosome-mediated centriole amplification occurs in terminally differentiated multiciliated cells and can generate more than 100 centrioles. Probably sufficient for the specification and formation of the deuterosome inner core. Interacts with CEP152 and recruits PLK4 to activate centriole biogenesis. The sequence is that of Deuterosome assembly protein 1 from Macaca fascicularis (Crab-eating macaque).